Reading from the N-terminus, the 232-residue chain is Putative homeobox protein NANOG2 (232 aa).

Positions 1–10 (MDLPIEDSHD) are enriched in basic and acidic residues. Residues 1-39 (MDLPIEDSHDSSTSPKGKQPTTAEKSATKKEDKVPVKKQ) form a disordered region. Residues 11-25 (SSTSPKGKQPTTAEK) are compositionally biased toward polar residues. Residues 26-35 (SATKKEDKVP) are compositionally biased toward basic and acidic residues. 8 repeat units span residues 123 to 127 (WSNQT), 128 to 132 (WNNSI), 133 to 137 (WSNET), 143 to 147 (WSNHS), 148 to 152 (WNTQT), 153 to 157 (WCTQS), 158 to 162 (WNNQA), and 163 to 167 (WNSPF). The interval 123–167 (WSNQTWNNSIWSNETQNIQSWSNHSWNTQTWCTQSWNNQAWNSPF) is 8 X repeats starting with a Trp in each unit. The tract at residues 123-167 (WSNQTWNNSIWSNETQNIQSWSNHSWNTQTWCTQSWNNQAWNSPF) is sufficient for transactivation activity. The interval 168-232 (YNCGEESLQS…YSTNMQPEDV (65 aa)) is sufficient for strong transactivation activity.

This sequence belongs to the Nanog homeobox family.

It localises to the nucleus. In terms of biological role, probable transcriptional regulator. The protein is Putative homeobox protein NANOG2 (NANOGP1) of Pan troglodytes (Chimpanzee).